A 173-amino-acid polypeptide reads, in one-letter code: uncharacterized protein (173 aa).

Helical transmembrane passes span 13–35 (LQVI…PLLS), 50–72 (IIFI…FLGL), 107–129 (NYLI…KYLL), and 139–161 (GYLI…RLIL).

It is found in the cell membrane. This is an uncharacterized protein from Rickettsia prowazekii (strain Madrid E).